The sequence spans 257 residues: Acetylglutamate kinase (257 aa).

Substrate-binding positions include 43–44 (GG), arginine 65, and asparagine 157. Residues 180 to 185 (DVSGIL) and 208 to 210 (IIT) each bind ATP.

This sequence belongs to the acetylglutamate kinase family. ArgB subfamily. Homodimer.

The protein localises to the cytoplasm. The catalysed reaction is N-acetyl-L-glutamate + ATP = N-acetyl-L-glutamyl 5-phosphate + ADP. Its pathway is amino-acid biosynthesis; L-arginine biosynthesis; N(2)-acetyl-L-ornithine from L-glutamate: step 2/4. Its function is as follows. Catalyzes the ATP-dependent phosphorylation of N-acetyl-L-glutamate. This chain is Acetylglutamate kinase, found in Klebsiella pneumoniae (strain 342).